Consider the following 288-residue polypeptide: Diaminopimelate epimerase (288 aa).

3 residues coordinate substrate: asparagine 13, glutamine 46, and asparagine 66. Cysteine 75 functions as the Proton donor in the catalytic mechanism. Substrate contacts are provided by residues 76–77 (GN), asparagine 166, asparagine 199, and 217–218 (ER). Cysteine 226 acts as the Proton acceptor in catalysis. 227–228 (GT) contacts substrate.

This sequence belongs to the diaminopimelate epimerase family. In terms of assembly, homodimer.

The protein localises to the cytoplasm. The enzyme catalyses (2S,6S)-2,6-diaminopimelate = meso-2,6-diaminopimelate. It participates in amino-acid biosynthesis; L-lysine biosynthesis via DAP pathway; DL-2,6-diaminopimelate from LL-2,6-diaminopimelate: step 1/1. In terms of biological role, catalyzes the stereoinversion of LL-2,6-diaminopimelate (L,L-DAP) to meso-diaminopimelate (meso-DAP), a precursor of L-lysine and an essential component of the bacterial peptidoglycan. The protein is Diaminopimelate epimerase of Cupriavidus taiwanensis (strain DSM 17343 / BCRC 17206 / CCUG 44338 / CIP 107171 / LMG 19424 / R1) (Ralstonia taiwanensis (strain LMG 19424)).